A 475-amino-acid polypeptide reads, in one-letter code: Tubulin epsilon chain (475 aa).

Residue 148 to 154 (GGGTGSG) participates in GTP binding.

Belongs to the tubulin family. In terms of assembly, found in a complex with TEDC1, TEDC2, TUBE1 and TUBD1.

Its subcellular location is the cytoplasm. The protein localises to the cytoskeleton. The protein resides in the microtubule organizing center. It localises to the centrosome. The sequence is that of Tubulin epsilon chain (TUBE1) from Homo sapiens (Human).